Reading from the N-terminus, the 226-residue chain is ATP synthase F(0) complex subunit a (226 aa).

The next 6 helical transmembrane spans lie at 12-32 (PTVL…LLVP), 68-88 (WSLM…LGLF), 97-117 (QLSM…AMGL), 138-158 (IPML…ALAV), 164-184 (ITAG…MLTI), and 189-209 (TLIT…VALI).

Belongs to the ATPase A chain family. As to quaternary structure, component of the ATP synthase complex composed at least of ATP5F1A/subunit alpha, ATP5F1B/subunit beta, ATP5MC1/subunit c (homooctomer), MT-ATP6/subunit a, MT-ATP8/subunit 8, ATP5ME/subunit e, ATP5MF/subunit f, ATP5MG/subunit g, ATP5MK/subunit k, ATP5MJ/subunit j, ATP5F1C/subunit gamma, ATP5F1D/subunit delta, ATP5F1E/subunit epsilon, ATP5PF/subunit F6, ATP5PB/subunit b, ATP5PD/subunit d, ATP5PO/subunit OSCP. ATP synthase complex consists of a soluble F(1) head domain (subunits alpha(3) and beta(3)) - the catalytic core - and a membrane F(0) domain - the membrane proton channel (subunits c, a, 8, e, f, g, k and j). These two domains are linked by a central stalk (subunits gamma, delta, and epsilon) rotating inside the F1 region and a stationary peripheral stalk (subunits F6, b, d, and OSCP). Interacts with DNAJC30; interaction is direct.

It localises to the mitochondrion inner membrane. It catalyses the reaction H(+)(in) = H(+)(out). Subunit a, of the mitochondrial membrane ATP synthase complex (F(1)F(0) ATP synthase or Complex V) that produces ATP from ADP in the presence of a proton gradient across the membrane which is generated by electron transport complexes of the respiratory chain. ATP synthase complex consist of a soluble F(1) head domain - the catalytic core - and a membrane F(1) domain - the membrane proton channel. These two domains are linked by a central stalk rotating inside the F(1) region and a stationary peripheral stalk. During catalysis, ATP synthesis in the catalytic domain of F(1) is coupled via a rotary mechanism of the central stalk subunits to proton translocation. With the subunit c (ATP5MC1), forms the proton-conducting channel in the F(0) domain, that contains two crucial half-channels (inlet and outlet) that facilitate proton movement from the mitochondrial intermembrane space (IMS) into the matrix. Protons are taken up via the inlet half-channel and released through the outlet half-channel, following a Grotthuss mechanism. In Pongo pygmaeus (Bornean orangutan), this protein is ATP synthase F(0) complex subunit a.